The sequence spans 342 residues: GTPase Obg (342 aa).

The Obg domain occupies 1 to 159 (MKFLDEAKVY…HWLWLRLKLI (159 aa)). Positions 160 to 327 (ADAGLVGLPN…ALRALMAAMD (168 aa)) constitute an OBG-type G domain. Residues 166–173 (GLPNAGKS), 191–195 (FTTLH), 212–215 (DIPG), 279–282 (SKAD), and 308–310 (SAA) contribute to the GTP site. The Mg(2+) site is built by Ser-173 and Thr-193.

The protein belongs to the TRAFAC class OBG-HflX-like GTPase superfamily. OBG GTPase family. As to quaternary structure, monomer. Mg(2+) is required as a cofactor.

The protein localises to the cytoplasm. In terms of biological role, an essential GTPase which binds GTP, GDP and possibly (p)ppGpp with moderate affinity, with high nucleotide exchange rates and a fairly low GTP hydrolysis rate. Plays a role in control of the cell cycle, stress response, ribosome biogenesis and in those bacteria that undergo differentiation, in morphogenesis control. In Methylobacterium nodulans (strain LMG 21967 / CNCM I-2342 / ORS 2060), this protein is GTPase Obg.